The primary structure comprises 299 residues: 33 kDa chaperonin (299 aa).

Disulfide bonds link Cys234–Cys236 and Cys268–Cys271.

This sequence belongs to the HSP33 family. Post-translationally, under oxidizing conditions two disulfide bonds are formed involving the reactive cysteines. Under reducing conditions zinc is bound to the reactive cysteines and the protein is inactive.

The protein resides in the cytoplasm. Redox regulated molecular chaperone. Protects both thermally unfolding and oxidatively damaged proteins from irreversible aggregation. Plays an important role in the bacterial defense system toward oxidative stress. This chain is 33 kDa chaperonin, found in Pseudomonas putida (strain GB-1).